The primary structure comprises 392 residues: Putative RNA-binding protein Luc7-like 2 (392 aa).

Residue serine 18 is modified to Phosphoserine. Positions 102 to 177 (EVAKKRLAET…EAEEVYRNSM (76 aa)) form a coiled coil. The span at 235-257 (KQEKRNQERLKRREEREREEREK) shows a compositional bias: basic and acidic residues. Residues 235 to 392 (KQEKRNQERL…SSEEREAGEI (158 aa)) form a disordered region. The segment covering 258–321 (LRRSRSHSKN…RSRSHQRSRH (64 aa)) has biased composition (basic residues). 5-hydroxylysine; by JMJD6 is present on residues lysine 266 and lysine 269. Basic and acidic residues-rich tracts occupy residues 337 to 364 (KERF…DRDR) and 377 to 392 (RSED…AGEI).

This sequence belongs to the Luc7 family. Interacts with SCNM1.

The protein resides in the nucleus speckle. It localises to the nucleus. Its subcellular location is the nucleoplasm. Functionally, may bind to RNA via its Arg/Ser-rich domain. The polypeptide is Putative RNA-binding protein Luc7-like 2 (LUC7L2) (Homo sapiens (Human)).